Here is a 410-residue protein sequence, read N- to C-terminus: Phosphoglycerate kinase (410 aa).

Substrate is bound by residues Asp-22–Asn-24, Arg-39, His-62–Arg-65, Arg-119, and Arg-159. ATP-binding positions include Glu-332 and Gly-358–Leu-361.

The protein belongs to the phosphoglycerate kinase family. In terms of assembly, homodimer.

Its subcellular location is the cytoplasm. It carries out the reaction (2R)-3-phosphoglycerate + ATP = (2R)-3-phospho-glyceroyl phosphate + ADP. It functions in the pathway carbohydrate degradation; glycolysis; pyruvate from D-glyceraldehyde 3-phosphate: step 2/5. The chain is Phosphoglycerate kinase (pgk) from Methanothermus fervidus (strain ATCC 43054 / DSM 2088 / JCM 10308 / V24 S).